Reading from the N-terminus, the 295-residue chain is Secreted frizzled-related protein 2 (295 aa).

The signal sequence occupies residues 1–24; it reads MPRGPASLLLLVLASHCCLGSARG. The region spanning 35–155 is the FZ domain; that stretch reads YKRSNCKPIP…PQDNDLCIPL (121 aa). Disulfide bonds link Cys-40–Cys-103, Cys-50–Cys-96, Cys-87–Cys-125, Cys-114–Cys-152, Cys-118–Cys-142, Cys-172–Cys-245, Cys-175–Cys-247, and Cys-190–Cys-295. An NTR domain is found at 172-295; that stretch reads CEACKTKNED…ISRSIRKLQC (124 aa).

Belongs to the secreted frizzled-related protein (sFRP) family. As to expression, highly expressed in the eye. Weaker expression in heart and lung.

Its subcellular location is the secreted. Its function is as follows. Soluble frizzled-related proteins (sFRPS) function as modulators of Wnt signaling through direct interaction with Wnts. They have a role in regulating cell growth and differentiation in specific cell types. SFRP2 may be important for eye retinal development and for myogenesis. This is Secreted frizzled-related protein 2 from Mus musculus (Mouse).